A 433-amino-acid polypeptide reads, in one-letter code: Keratin, type I cytoskeletal 17 (433 aa).

A disordered region spans residues 1 to 24 (MTTTIRQFTSSSSIKGSSGLGGGS). The interval 1–83 (MTTTIRQFTS…GGVDGLLAGG (83 aa)) is head. Phosphoserine is present on residues Ser12 and Ser13. A Glycyl lysine isopeptide (Lys-Gly) (interchain with G-Cter in SUMO1); alternate cross-link involves residue Lys15. Lys15 is covalently cross-linked (Glycyl lysine isopeptide (Lys-Gly) (interchain with G-Cter in SUMO2); alternate). Phosphoserine is present on residues Ser25, Ser32, Ser34, and Ser39. Phosphoserine; by RPS6KA1 is present on Ser44. Positions 84–120 (EKATMQNLNDRLASYLDKVRALEEANTELEVKIRDWY) are coil 1A. The IF rod domain occupies 84-395 (EKATMQNLND…RLLEGEDAHL (312 aa)). The residue at position 110 (Thr110) is a Phosphothreonine. The linker 1 stretch occupies residues 121–138 (QKQAPGPARDYSAYYQTI). The coil 1B stretch occupies residues 139–230 (EDLKNKILVA…NHEEEMNALR (92 aa)). The segment at 231–250 (GQVGGEINVEMDAAPGVDLS) is linker 12. Residues 251-392 (RILSEMRDQY…TYRRLLEGED (142 aa)) are coil 2. Lys278 participates in a covalent cross-link: Glycyl lysine isopeptide (Lys-Gly) (interchain with G-Cter in SUMO2). Thr279 bears the Phosphothreonine mark. Ser323 is subject to Phosphoserine. The tract at residues 393-433 (AHLTQYKPKEPVTTRQVRTIVEEVQDGKVISSREQVHQTTR) is tail. Glycyl lysine isopeptide (Lys-Gly) (interchain with G-Cter in SUMO1); alternate cross-links involve residues Lys399, Lys401, and Lys420. Glycyl lysine isopeptide (Lys-Gly) (interchain with G-Cter in SUMO2); alternate cross-links involve residues Lys399, Lys401, and Lys420.

It belongs to the intermediate filament family. Heterodimer of a type I and a type II keratin. KRT17 associates with KRT6 isomers (KRT6A or KRT6B). Interacts with TRADD and SFN. In terms of processing, phosphorylation at Ser-44 occurs in a growth- and stress-dependent fashion in skin keratinocytes, it has no effect on filament organization.

Its subcellular location is the cytoplasm. Its function is as follows. Type I keratin involved in the formation and maintenance of various skin appendages, specifically in determining shape and orientation of hair. Required for the correct growth of hair follicles, in particular for the persistence of the anagen (growth) state. Modulates the function of TNF-alpha in the specific context of hair cycling. Regulates protein synthesis and epithelial cell growth through binding to the adapter protein SFN and by stimulating Akt/mTOR pathway. Involved in tissue repair. May be a marker of basal cell differentiation in complex epithelia and therefore indicative of a certain type of epithelial 'stem cells'. Acts as a promoter of epithelial proliferation by acting a regulator of immune response in skin: promotes Th1/Th17-dominated immune environment contributing to the development of basaloid skin tumors. May act as an autoantigen in the immunopathogenesis of psoriasis, with certain peptide regions being a major target for autoreactive T-cells and hence causing their proliferation. The polypeptide is Keratin, type I cytoskeletal 17 (Rattus norvegicus (Rat)).